A 1314-amino-acid chain; its full sequence is Tetratricopeptide repeat protein 21A (1314 aa).

TPR repeat units follow at residues 110–143 (STAL…SSGS), 214–247 (LPAL…DENN), 326–359 (ALVA…EENR), 494–527 (MEPL…DPTF), 529–561 (DAHL…NFQV), 565–598 (PLYH…PTSK), 616–649 (ASIL…FSGT), 721–754 (PHSS…NPHD), 755–788 (ASLV…SGQD), 790–821 (LCCE…DSGV), 831–863 (VKCL…QSRI), 883–916 (ASIC…SPTD), 918–950 (KVVL…EQTH), 951–984 (ERAA…APDN), 986–1018 (LVLN…SSRV), 1022–1055 (PGFN…STWG), 1195–1228 (EKSW…NKSC), 1230–1262 (RAYE…SHQA), and 1264–1297 (PAIG…HPKY).

The protein belongs to the TTC21 family. In terms of assembly, interacts with IFT20. Interacts with IFT52. Interacts with IFT140. Interacts with CEP78; regulating IFT20 stability and localization.

Its function is as follows. Intraflagellar transport (IFT)-associated protein required for spermatogenesis. Required for sperm flagellar formation and intraflagellar transport. This is Tetratricopeptide repeat protein 21A (Ttc21a) from Mus musculus (Mouse).